A 320-amino-acid polypeptide reads, in one-letter code: HPr kinase/phosphorylase (320 aa).

Catalysis depends on residues His139 and Lys160. Residue 154–161 coordinates ATP; the sequence is GDSGVGKS. Residue Ser161 participates in Mg(2+) binding. Catalysis depends on Asp178, which acts as the Proton acceptor; for phosphorylation activity. Proton donor; for dephosphorylation activity. Residues 202–211 are important for the catalytic mechanism of both phosphorylation and dephosphorylation; that stretch reads MEIRGIGIID. Glu203 lines the Mg(2+) pocket. Residue Arg244 is part of the active site. The tract at residues 265–270 is important for the catalytic mechanism of dephosphorylation; it reads PVKTGR.

This sequence belongs to the HPrK/P family. Homohexamer. Mg(2+) serves as cofactor.

The enzyme catalyses [HPr protein]-L-serine + ATP = [HPr protein]-O-phospho-L-serine + ADP + H(+). It catalyses the reaction [HPr protein]-O-phospho-L-serine + phosphate + H(+) = [HPr protein]-L-serine + diphosphate. Its function is as follows. Catalyzes the ATP- as well as the pyrophosphate-dependent phosphorylation of a specific serine residue in HPr, a phosphocarrier protein of the phosphoenolpyruvate-dependent sugar phosphotransferase system (PTS). HprK/P also catalyzes the pyrophosphate-producing, inorganic phosphate-dependent dephosphorylation (phosphorolysis) of seryl-phosphorylated HPr (P-Ser-HPr). The two antagonistic activities of HprK/P are regulated by several intracellular metabolites, which change their concentration in response to the absence or presence of rapidly metabolisable carbon sources (glucose, fructose, etc.) in the growth medium. Therefore, by controlling the phosphorylation state of HPr, HPrK/P is a sensor enzyme that plays a major role in the regulation of carbon metabolism and sugar transport: it mediates carbon catabolite repression (CCR), and regulates PTS-catalyzed carbohydrate uptake and inducer exclusion. The polypeptide is HPr kinase/phosphorylase (Limosilactobacillus reuteri (strain DSM 20016) (Lactobacillus reuteri)).